The primary structure comprises 47 residues: Defensin Tk-AMP-D1.1 (47 aa).

4 disulfide bridges follow: Cys-3–Cys-47, Cys-14–Cys-34, Cys-20–Cys-41, and Cys-24–Cys-43.

Functionally, plant defense peptide. This Triticum kiharae (Wheat) protein is Defensin Tk-AMP-D1.1.